The following is a 555-amino-acid chain: Membrane protein insertase YidC (555 aa).

Residues 7-24 (ILWVIFSMSLVLLYDNWQ) form a helical membrane-spanning segment. Low complexity-rich tracts occupy residues 40–54 (QQAA…TPQA) and 64–81 (AAPG…QPVG). Positions 40 to 81 (QQAAPAGAGGATPQADVPKANATNAAPGTVPAAPQAAAQPVG) are disordered. The next 5 membrane-spanning stretches (helical) occupy residues 334–354 (LELV…FWLL), 360–380 (FLGN…LVFF), 430–450 (LGGC…YWVL), 468–488 (LSVP…MFVQ), and 503–523 (VMMI…AGLV).

This sequence belongs to the OXA1/ALB3/YidC family. Type 1 subfamily. In terms of assembly, interacts with the Sec translocase complex via SecD. Specifically interacts with transmembrane segments of nascent integral membrane proteins during membrane integration.

The protein resides in the cell inner membrane. In terms of biological role, required for the insertion and/or proper folding and/or complex formation of integral membrane proteins into the membrane. Involved in integration of membrane proteins that insert both dependently and independently of the Sec translocase complex, as well as at least some lipoproteins. Aids folding of multispanning membrane proteins. The chain is Membrane protein insertase YidC from Cupriavidus metallidurans (strain ATCC 43123 / DSM 2839 / NBRC 102507 / CH34) (Ralstonia metallidurans).